The sequence spans 678 residues: Photosystem I P700 chlorophyll a apoprotein A1 (678 aa).

A run of 8 helical transmembrane segments spans residues 75–98 (VFAA…FHGA), 152–175 (LKVI…FHMH), 192–216 (STHH…HISL), 266–284 (SAMH…SVLG), 302–325 (WHLV…QMSN), 341–367 (VSLF…IGLV), 384–406 (IILG…LYVH), and 458–476 (FMVT…LILV). [4Fe-4S] cluster-binding residues include C500 and C509. 2 helical membrane passes run 516–537 (HVFL…HFFW) and 591–613 (LAAY…MFLF). H602 is a binding site for chlorophyll a'. Chlorophyll a contacts are provided by M610 and Y618. Position 619 (W619) interacts with phylloquinone. A helical membrane pass occupies residues 651-671 (AVGFTHYLLGGIGSTWSFFLA).

The protein belongs to the PsaA/PsaB family. As to quaternary structure, the PsaA/B heterodimer binds the P700 chlorophyll special pair and subsequent electron acceptors. PSI consists of a core antenna complex that captures photons, and an electron transfer chain that converts photonic excitation into a charge separation. The eukaryotic PSI reaction center is composed of at least 11 subunits. P700 is a chlorophyll a/chlorophyll a' dimer, A0 is one or more chlorophyll a, A1 is one or both phylloquinones and FX is a shared 4Fe-4S iron-sulfur center. serves as cofactor.

It is found in the plastid. Its subcellular location is the chloroplast thylakoid membrane. It catalyses the reaction reduced [plastocyanin] + hnu + oxidized [2Fe-2S]-[ferredoxin] = oxidized [plastocyanin] + reduced [2Fe-2S]-[ferredoxin]. In terms of biological role, psaA and PsaB bind P700, the primary electron donor of photosystem I (PSI), as well as the electron acceptors A0, A1 and FX. PSI is a plastocyanin/cytochrome c6-ferredoxin oxidoreductase, converting photonic excitation into a charge separation, which transfers an electron from the donor P700 chlorophyll pair to the spectroscopically characterized acceptors A0, A1, FX, FA and FB in turn. Oxidized P700 is reduced on the lumenal side of the thylakoid membrane by plastocyanin or cytochrome c6. The chain is Photosystem I P700 chlorophyll a apoprotein A1 from Amphidinium carterae (Dinoflagellate).